The sequence spans 598 residues: Terpenoid synthase 1 (598 aa).

Residues Asp-362, Asp-366, Asn-494, and Asp-502 each coordinate Mg(2+). The DDXXD motif signature appears at 362–366 (DDTCD).

It belongs to the terpene synthase family. Tpsa subfamily. Mg(2+) is required as a cofactor. The cofactor is Mn(2+). In terms of tissue distribution, expressed exclusively in siliques.

It localises to the cytoplasm. Its pathway is secondary metabolite biosynthesis; terpenoid biosynthesis. The sequence is that of Terpenoid synthase 1 (TPS01) from Arabidopsis thaliana (Mouse-ear cress).